We begin with the raw amino-acid sequence, 605 residues long: IQ domain-containing protein IQM2 (605 aa).

The IQ domain maps to 105–134 (KHEAAIKLQKVYKSFRTRRKLADCAVLVEQ). The segment at 408–505 (QDKVDPSGEE…EEGETKESEV (98 aa)) is disordered. A compositionally biased stretch (basic and acidic residues) spans 425–440 (SISRKQSDLETPEKME). Residues 462–480 (DYDSGDDEEEEEEMFELEQ) show a composition bias toward acidic residues. The segment covering 481–490 (ESMPSEQSSP) has biased composition (low complexity). Over residues 491–505 (RGEEKEEGETKESEV) the composition is skewed to basic and acidic residues.

As to expression, expressed in rosette and cauline leaves, stems, flowers and siliques, and at lower levels in roots.

The protein resides in the cytoplasm. It is found in the nucleus. Functionally, may be involved in biotic and abiotic stress responses. In Arabidopsis thaliana (Mouse-ear cress), this protein is IQ domain-containing protein IQM2.